We begin with the raw amino-acid sequence, 423 residues long: Putative gustatory receptor 97a (423 aa).

Residues 1–31 (MRFLRRQTRRLRSIWQRSLPVRFRRGKLHTQ) are Cytoplasmic-facing. A helical membrane pass occupies residues 32-52 (LVTICLYATVFLNILYGVYLG). The Extracellular portion of the chain corresponds to 53 to 65 (RFSFRRKKFVFSK). A helical membrane pass occupies residues 66 to 86 (GLTIYSLFVATFFALFYIWNI). Topologically, residues 87 to 99 (YNEISTGQINLRD) are cytoplasmic. Residues 100-120 (TIGIYCYMNVCVCLFNYVTQW) form a helical membrane-spanning segment. Over 121–152 (EKTLQIIRFQNSVPLFKVLDSLDISAMIVWRA) the chain is Extracellular. A helical membrane pass occupies residues 153–173 (FIYGLLKIVFCPLITYITLIL). The Cytoplasmic segment spans residues 174-200 (YHRRSISESQWTSVTTTKTMLPLIVSN). The helical transmembrane segment at 201-221 (QINNCFFGGLVLANLIFAAVN) threads the bilayer. Topologically, residues 222–278 (RKLHGIVKEANMLQSPVQMNLHKPYYRMRRFCELADLLDELARKYGFTASRSKNYLR) are extracellular. Residues 279–299 (FTDWSMVLSMLMNLLGITMGC) form a helical membrane-spanning segment. Over 300–317 (YNQYLAIADHYINEEPFD) the chain is Cytoplasmic. Residues 318 to 338 (LFLAIVLVVFLAVPFLELVMV) form a helical membrane-spanning segment. Residues 339-423 (ARISNQTLTR…SDLTLRFSLK (85 aa)) are Extracellular-facing. N-linked (GlcNAc...) asparagine glycosylation is found at asparagine 343 and asparagine 393.

Belongs to the insect chemoreceptor superfamily. Gustatory receptor (GR) family. Gr22e subfamily. As to expression, in larvae, is expressed in neurons of the terminal external chemosensory organ.

It localises to the cell membrane. Functionally, probable gustatory receptor which mediates acceptance or avoidance behavior, depending on its substrates. This is Putative gustatory receptor 97a (Gr97a) from Drosophila melanogaster (Fruit fly).